A 340-amino-acid polypeptide reads, in one-letter code: Tetraacyldisaccharide 4'-kinase (340 aa).

50–57 serves as a coordination point for ATP; it reads HGGGAGKT.

This sequence belongs to the LpxK family.

The enzyme catalyses a lipid A disaccharide + ATP = a lipid IVA + ADP + H(+). It functions in the pathway glycolipid biosynthesis; lipid IV(A) biosynthesis; lipid IV(A) from (3R)-3-hydroxytetradecanoyl-[acyl-carrier-protein] and UDP-N-acetyl-alpha-D-glucosamine: step 6/6. Functionally, transfers the gamma-phosphate of ATP to the 4'-position of a tetraacyldisaccharide 1-phosphate intermediate (termed DS-1-P) to form tetraacyldisaccharide 1,4'-bis-phosphate (lipid IVA). The polypeptide is Tetraacyldisaccharide 4'-kinase (Rhodopseudomonas palustris (strain BisA53)).